Consider the following 195-residue polypeptide: Probable GTP-binding protein EngB (195 aa).

In terms of domain architecture, EngB-type G spans 22-195; the sequence is GYPEIALVGR…WKWIEDRMGE (174 aa). GTP is bound by residues 30–37, 57–61, 75–78, 142–145, and 173–176; these read GRSNVGKS, GKTQT, DVPG, TKSD, and MFSA. Mg(2+) contacts are provided by serine 37 and threonine 59.

The protein belongs to the TRAFAC class TrmE-Era-EngA-EngB-Septin-like GTPase superfamily. EngB GTPase family. Mg(2+) serves as cofactor.

Necessary for normal cell division and for the maintenance of normal septation. This chain is Probable GTP-binding protein EngB, found in Pediococcus pentosaceus (strain ATCC 25745 / CCUG 21536 / LMG 10740 / 183-1w).